The sequence spans 235 residues: Sugar fermentation stimulation protein homolog (235 aa).

It belongs to the SfsA family.

This is Sugar fermentation stimulation protein homolog from Bartonella henselae (strain ATCC 49882 / DSM 28221 / CCUG 30454 / Houston 1) (Rochalimaea henselae).